A 398-amino-acid polypeptide reads, in one-letter code: Cytochrome b (398 aa).

The helical transmembrane segment at 45–65 threads the bilayer; the sequence is LGSIAGIALVIQIITGVILAM. Heme b contacts are provided by H95 and H109. 9 helical membrane-spanning segments follow: residues 96–116, 129–149, 164–184, 192–212, 245–265, 277–297, 304–324, 339–359, and 366–386; these read AVGA…GLYY, IGII…VLPW, FSAI…GFSV, FFAL…LHLV, FVGF…APNY, PLVT…YAIL, LGGV…PWLD, IAFW…SKPV, and ISRF…PLIG. 2 residues coordinate heme b: H196 and H210.

The protein belongs to the cytochrome b family. The main subunits of complex b-c1 are: cytochrome b, cytochrome c1 and the Rieske protein. Heme b is required as a cofactor.

It is found in the cell membrane. Component of the ubiquinol-cytochrome c reductase complex (complex III or cytochrome b-c1 complex), which is a respiratory chain that generates an electrochemical potential coupled to ATP synthesis. In Rickettsia prowazekii (strain Madrid E), this protein is Cytochrome b (petB).